Consider the following 25-residue polypeptide: Kappa-conotoxin RIIIJ (25 aa).

7 positions are modified to 4-hydroxyproline: proline 2, proline 3, proline 7, proline 8, proline 13, proline 15, and proline 21. 3 disulfides stabilise this stretch: cysteine 4-cysteine 17, cysteine 5-cysteine 22, and cysteine 12-cysteine 23.

The protein belongs to the conotoxin M superfamily. As to expression, expressed by the venom duct.

The protein resides in the secreted. Functionally, kappa-conotoxins inhibits voltage-gated potassium channels. This toxin dose-dependently and reversibly inhibits the Kv1.2/KCNA2 channel in mammalia. Does not exert protective effect on cardiac tissue when administered after an ischemic event. This chain is Kappa-conotoxin RIIIJ, found in Conus radiatus (Rayed cone).